Here is a 384-residue protein sequence, read N- to C-terminus: PqqA peptide cyclase (384 aa).

The 216-residue stretch at 5–220 (VGLPLWLLAE…TNEYREKLKA (216 aa)) folds into the Radical SAM core domain. [4Fe-4S] cluster-binding residues include Cys-19, Cys-23, and Cys-26.

It belongs to the radical SAM superfamily. PqqE family. As to quaternary structure, interacts with PqqD. The interaction is necessary for activity of PqqE. [4Fe-4S] cluster serves as cofactor.

The catalysed reaction is [PQQ precursor protein] + S-adenosyl-L-methionine = E-Y cross-linked-[PQQ precursor protein] + 5'-deoxyadenosine + L-methionine + H(+). It functions in the pathway cofactor biosynthesis; pyrroloquinoline quinone biosynthesis. Its function is as follows. Catalyzes the cross-linking of a glutamate residue and a tyrosine residue in the PqqA protein as part of the biosynthesis of pyrroloquinoline quinone (PQQ). In Acinetobacter baumannii (strain ACICU), this protein is PqqA peptide cyclase.